The primary structure comprises 154 residues: Nuclear cap-binding protein subunit 2 (154 aa).

MRNA contacts are provided by residues Tyr-10, Tyr-33, 102–106 (RCDWD), 113–117 (RQYGR), and 123–124 (QV). Residues 30–108 (STLYMGNLSF…RIIRCDWDAG (79 aa)) enclose the RRM domain.

This sequence belongs to the RRM NCBP2 family. Component of the nuclear cap-binding complex (CBC), a heterodimer composed of Cbp80 and Cbp20 that interacts with m7GpppG-capped RNA.

The protein resides in the nucleus. Functionally, component of the cap-binding complex (CBC), which binds co-transcriptionally to the 5' cap of pre-mRNAs and is involved in various processes such as pre-mRNA splicing and RNA-mediated gene silencing (RNAi). The CBC complex is involved in miRNA-mediated RNA interference and is required for primary microRNAs (miRNAs) processing. Also involved in innate immunity via the short interfering RNAs (siRNAs) processing machinery by restricting the viral RNA production. In the CBC complex, Cbp20 recognizes and binds capped RNAs (m7GpppG-capped RNA) but requires Cbp80 to stabilize the movement of its N-terminal loop and lock the CBC into a high affinity cap-binding state with the cap structure. This is Nuclear cap-binding protein subunit 2 from Bombyx mori (Silk moth).